The sequence spans 225 residues: UPF0758 protein BAV2405 (225 aa).

The MPN domain occupies 103 to 225 (AMKHPEEVRR…ALSMAERGLI (123 aa)). Histidine 174, histidine 176, and aspartate 187 together coordinate Zn(2+). The short motif at 174–187 (HNHPSGNPQPSAAD) is the JAMM motif element.

It belongs to the UPF0758 family.

The sequence is that of UPF0758 protein BAV2405 from Bordetella avium (strain 197N).